The following is a 472-amino-acid chain: Methanethiol oxidase (472 aa).

This sequence belongs to the selenium-binding protein family.

The protein resides in the nucleus. It localises to the cytoplasm. It is found in the cytosol. Its subcellular location is the membrane. The enzyme catalyses methanethiol + O2 + H2O = hydrogen sulfide + formaldehyde + H2O2 + H(+). It functions in the pathway organosulfur degradation. Functionally, catalyzes the oxidation of methanethiol, an organosulfur compound known to be produced in substantial amounts by gut bacteria. Selenium-binding protein which may be involved in the sensing of reactive xenobiotics in the cytoplasm. May be involved in intra-Golgi protein transport. The sequence is that of Methanethiol oxidase (selenbp1) from Xenopus tropicalis (Western clawed frog).